The following is a 216-amino-acid chain: Transmembrane emp24 domain-containing protein p24delta5 (216 aa).

The signal sequence occupies residues 1 to 27 (MAINRIAHGSLFLTVVLFFLTVNYGEA). The Lumenal portion of the chain corresponds to 28-183 (IWLTIPTTGG…REVSETTNSR (156 aa)). A GOLD domain is found at 38–151 (TKCVSEEIQS…IEGVELQLRR (114 aa)). The N-linked (GlcNAc...) asparagine glycan is linked to Asn-86. Residues 137–159 (AKKEKIEGVELQLRRLEGLVLSI) adopt a coiled-coil conformation. An omega-N-methylated arginine mark is found at Arg-169 and Arg-174. Residues 184 to 204 (VAWFSIMSLGVCVVVVGSQIL) traverse the membrane as a helical segment. Residues 205-216 (YLKRYFHKKKLI) lie on the Cytoplasmic side of the membrane. Residues 209–210 (YF) carry the COPII vesicle coat-binding motif. The short motif at 209-216 (YFHKKKLI) is the COPI vesicle coat-binding element.

This sequence belongs to the EMP24/GP25L family. As to quaternary structure, probably oligomerizes with other members of the EMP24/GP25L family. Associates with the COPI vesicle coat (coatomer). Associates with the COPII vesicle coat (coatomer). Interacts with p24beta2.

The protein localises to the endoplasmic reticulum membrane. Its function is as follows. Involved in vesicular protein trafficking. Mainly functions in the early secretory pathway. Thought to act as cargo receptor at the lumenal side for incorporation of secretory cargo molecules into transport vesicles and to be involved in vesicle coat formation at the cytoplasmic side. Interacts with p24beta2 at endoplasmic reticulum export sites for endoplasmic reticulum exit and coupled transport to the Golgi apparatus. Once in the Golgi, interacts very efficiently with the COPI machinery for retrograde transport back to the endoplasmic reticulum. The protein is Transmembrane emp24 domain-containing protein p24delta5 of Arabidopsis thaliana (Mouse-ear cress).